A 321-amino-acid chain; its full sequence is tRNA(Ile)-lysidine synthase (321 aa).

Residue 30–35 (SGGSDS) coordinates ATP.

This sequence belongs to the tRNA(Ile)-lysidine synthase family.

It is found in the cytoplasm. The catalysed reaction is cytidine(34) in tRNA(Ile2) + L-lysine + ATP = lysidine(34) in tRNA(Ile2) + AMP + diphosphate + H(+). Its function is as follows. Ligates lysine onto the cytidine present at position 34 of the AUA codon-specific tRNA(Ile) that contains the anticodon CAU, in an ATP-dependent manner. Cytidine is converted to lysidine, thus changing the amino acid specificity of the tRNA from methionine to isoleucine. The polypeptide is tRNA(Ile)-lysidine synthase (Chlamydia trachomatis serovar A (strain ATCC VR-571B / DSM 19440 / HAR-13)).